The primary structure comprises 400 residues: Clotting factor B (400 aa).

Positions 1–23 (MTWICVITLFALASATLGNKVSR) are cleaved as a signal peptide. In terms of domain architecture, Clip spans 36–80 (ECTARGGLKGSCKSLIDCPSVLATLKDSFPVVCSWNGRFQPIVCC). Cystine bridges form between C37-C79, C47-C68, and C53-C80. Residues 104-124 (LPRLHISGCGKRKVKIDITTV) constitute a propeptide, activation peptide. N-linked (GlcNAc...) asparagine glycosylation is present at N140. A Peptidase S1 domain is found at 148–392 (IAGGVEAKIG…YLDWIAKVTN (245 aa)). Residues H192 and D240 each act as charge relay system in the active site. N251 carries an N-linked (GlcNAc...) asparagine glycan. 2 disulfides stabilise this stretch: C307-C329 and C340-C368. S344 (charge relay system) is an active-site residue. A glycan (N-linked (GlcNAc...) asparagine) is linked at N352.

Belongs to the peptidase S1 family. CLIP subfamily. In terms of assembly, upon activation by factor C, it is converted to a two-chain active form composed of a light and a heavy chain linked by a disulfide bond.

It localises to the secreted. The catalysed reaction is Selective cleavage of 98-Arg-|-Ile-99 bond in Limulus proclotting enzyme to form active clotting enzyme.. With respect to regulation, strongly inhibited by alpha2-plasmin inhibitor and DFP. Partially inhibited by benzamidine, leupeptin and PCMB. In terms of biological role, this enzyme is closely associated with an endotoxin-sensitive hemolymph coagulation system which may play important roles in both hemostasis and host defense mechanisms. Its active form catalyzes the activation of proclotting enzyme. Does not activate the mammalian coagulation factors factor IX, factor X, prothrombin, plasminogen, protein C or prekallikrein. Does not hydrolyze fibrinogen. Does not catalyze the activation of factor C or coagulogen. This chain is Clotting factor B, found in Tachypleus tridentatus (Japanese horseshoe crab).